The primary structure comprises 324 residues: 2-dehydro-3-deoxygluconokinase (324 aa).

Substrate contacts are provided by residues 35–39, 106–108, and Arg170; these read GAESN and YYR. ATP-binding positions include 168 to 170, 228 to 233, and 258 to 261; these read NVR, KLGKEG, and GAGD. Asp261 and Asp297 together coordinate substrate. Asp261 functions as the Proton acceptor in the catalytic mechanism.

The protein belongs to the carbohydrate kinase PfkB family.

The catalysed reaction is 2-dehydro-3-deoxy-D-gluconate + ATP = 2-dehydro-3-deoxy-6-phospho-D-gluconate + ADP + H(+). It participates in carbohydrate acid metabolism; 2-dehydro-3-deoxy-D-gluconate degradation; D-glyceraldehyde 3-phosphate and pyruvate from 2-dehydro-3-deoxy-D-gluconate: step 1/2. Catalyzes the phosphorylation of 2-keto-3-deoxygluconate (KDG) to produce 2-keto-3-deoxy-6-phosphogluconate (KDPG). In Bacillus subtilis (strain 168), this protein is 2-dehydro-3-deoxygluconokinase (kdgK).